We begin with the raw amino-acid sequence, 389 residues long: Agamous-like MADS-box protein AGL65 (389 aa).

The region spanning 1–61 (MGRVKLKIKR…GRATAFHGEH (61 aa)) is the MADS-box domain. 2 coiled-coil regions span residues 77 to 131 (QERT…LMEC) and 293 to 325 (GMEE…QQQD). Residues 310–343 (NLQQQQQQQQQQQQQDPSMYDPMANNNGGCFQIP) are disordered. Low complexity predominate over residues 312 to 324 (QQQQQQQQQQQQQ).

In terms of assembly, forms a heterodimer with AGL104. Expressed in pollen.

The protein resides in the nucleus. Functionally, probable transcription factor that forms a heterodimer with the MADS-box protein AGL104 and is involved in the regulation of pollen maturation at the late stages of pollen development and pollen tube growth. The chain is Agamous-like MADS-box protein AGL65 from Arabidopsis thaliana (Mouse-ear cress).